The sequence spans 256 residues: Calsenilin (256 aa).

Positions 1–22 (MQRTKEAVKASDGNLLGDPGRI) are disordered. Lys26 participates in a covalent cross-link: Glycyl lysine isopeptide (Lys-Gly) (interchain with G-Cter in SUMO1). S-palmitoyl cysteine attachment occurs at residues Cys45 and Cys46. Phosphoserine occurs at positions 60 and 63. The EF-hand 1; degenerate domain occupies 67–123 (LELSTVRHQPEGLDQLQAQTKFTKKELQSLYRGFKNECPTGLVDEDTFKLIYSQFFP). Residue Lys90 forms a Glycyl lysine isopeptide (Lys-Gly) (interchain with G-Cter in SUMO1) linkage. EF-hand domains are found at residues 126–161 (DATT…LLRG), 162–197 (TVHE…IYDM), and 210–245 (APLE…DENI). Residues Asp175, Asn177, Asp179, Cys181, Glu186, Asp223, Asn225, Asp227, and Glu234 each contribute to the Ca(2+) site. Positions 243–256 (ENIMNSMQLFENVI) are interaction with KCND2.

Belongs to the recoverin family. In terms of assembly, binds to DNA as a homomultimer. Dimerization is induced by binding to calcium. Interacts with the C-terminus of PSEN1 and PSEN2 and with PSEN2 CTF subunit. Associates with KCN1. Component of heteromultimeric potassium channels. Identified in potassium channel complexes containing KCND1, KCND2, KCND3, KCNIP1, KCNIP2, KCNIP3, KCNIP4, DPP6 and DPP10. Interacts with KCND2 and KCND3. Palmitoylated. Palmitoylation enhances association with the plasma membrane. In terms of processing, proteolytically cleaved by caspase-3. Highly expressed in brain. Isoform 1 or isoform 4 (T+ forms) are expressed at equal levels with isoform 2 or isoform 3 (T- forms). Primarily detected in the layer V and deep layer VI of the cerebral cortex, the hippocampus, and the entire cerebellum. Expressed at low levels in testis. Also expressed in heart.

It is found in the cytoplasm. The protein localises to the cell membrane. It localises to the endoplasmic reticulum. Its subcellular location is the golgi apparatus. The protein resides in the nucleus. Calcium-dependent transcriptional repressor that binds to the DRE element of genes including PDYN and FOS. Affinity for DNA is reduced upon binding to calcium and enhanced by binding to magnesium. Seems to be involved in nociception. In terms of biological role, regulatory subunit of Kv4/D (Shal)-type voltage-gated rapidly inactivating A-type potassium channels, such as KCND2/Kv4.2 and KCND3/Kv4.3. Modulates channel expression at the cell membrane, gating characteristics, inactivation kinetics and rate of recovery from inactivation in a calcium-dependent and isoform-specific manner. Functionally, may play a role in the regulation of PSEN2 proteolytic processing and apoptosis. Together with PSEN2 involved in modulation of amyloid-beta formation. In Mus musculus (Mouse), this protein is Calsenilin (Kcnip3).